The chain runs to 65 residues: SPbeta prophage-derived uncharacterized protein YorO (65 aa).

This Bacillus subtilis (strain 168) protein is SPbeta prophage-derived uncharacterized protein YorO (yorO).